Here is a 366-residue protein sequence, read N- to C-terminus: Galactoside alpha-(1,2)-fucosyltransferase 1 (366 aa).

Topologically, residues 1–8 (MWPRSHRH) are cytoplasmic. The helical; Signal-anchor for type II membrane protein transmembrane segment at 9-25 (LCLAFLLVCVLSAISFL) threads the bilayer. The Lumenal segment spans residues 26-366 (IHFHQDSIRH…LSPLWPLAEP (341 aa)). N-linked (GlcNAc...) asparagine glycosylation is found at N66, N302, and N328.

It belongs to the glycosyltransferase 11 family.

It is found in the golgi apparatus. The protein localises to the golgi stack membrane. It carries out the reaction a beta-D-galactosyl-(1-&gt;4)-N-acetyl-beta-D-glucosaminyl derivative + GDP-beta-L-fucose = an alpha-L-Fuc-(1-&gt;2)-beta-D-Gal-(1-&gt;4)-beta-D-GlcNAc derivative + GDP + H(+). The enzyme catalyses a ganglioside GA1 + GDP-beta-L-fucose = a ganglioside Fuc-GA1 + GDP + H(+). The catalysed reaction is a beta-D-Gal-(1-&gt;3)-beta-D-GlcNAc-(1-&gt;3)-beta-D-Gal-(1-&gt;4)-beta-D-Glc-(1&lt;-&gt;1')-Cer(d18:1(4E)) + GDP-beta-L-fucose = alpha-L-fucosyl-(1-&gt;2)- beta-D-galactosyl-(1-&gt;3)-N-acetyl-beta-D-glucosaminyl-(1-&gt;3)-beta-D-galactosyl-(1-&gt;4)-beta-D-glucosyl-(1&lt;-&gt;1')-N-acylsphing-4-enine + GDP + H(+). It catalyses the reaction a neolactoside nLc4Cer(d18:1(4E)) + GDP-beta-L-fucose = a neolactoside IV(2)-alpha-Fuc-nLc4Cer(d18:1(4E)) + GDP + H(+). It carries out the reaction a ganglioside GM1 + GDP-beta-L-fucose = a ganglioside Fuc-GM1 + GDP + H(+). The enzyme catalyses beta-D-galactosyl-(1-&gt;3)-N-acetyl-D-galactosamine + GDP-beta-L-fucose = alpha-L-fucosyl-(1-&gt;2)-beta-D-galactosyl-(1-&gt;3)-N-acetyl-D-galactosamine + GDP + H(+). It participates in protein modification; protein glycosylation. Its function is as follows. Catalyzes the transfer of L-fucose, from a guanosine diphosphate-beta-L-fucose, to the terminal galactose residue of glycoconjugates through an alpha(1,2) linkage leading to H antigen synthesis that is an intermediate substrate in the synthesis of ABO blood group antigens. H antigen is essential for maturation of the glomerular layer of the main olfactory bulb, in cell migration and early cell-cell contacts during tumor associated angiogenesis. Preferentially fucosylates soluble lactose and to a lesser extent fucosylates glycolipids gangliosides GA1 and GM1a. The chain is Galactoside alpha-(1,2)-fucosyltransferase 1 from Saimiri boliviensis boliviensis (Bolivian squirrel monkey).